Reading from the N-terminus, the 187-residue chain is MKINGNEIRPGNVIEHNGGLWVAVKTNAVKPGKGGAYNQVELKNLIDGTKLNERFRSAETVEKVRLEQKDFTFLYEQGDALVFMDSETYEQLELQKDFVGDRAAFLQDGMTVTVELYQEKPIGISLPPQVTLQVAEADPVVKGQTAASSYKPAVLENGVRILVPPFVSAGERIVVDTDEITYLRRAD.

The protein belongs to the elongation factor P family.

It localises to the cytoplasm. Its pathway is protein biosynthesis; polypeptide chain elongation. In terms of biological role, involved in peptide bond synthesis. Stimulates efficient translation and peptide-bond synthesis on native or reconstituted 70S ribosomes in vitro. Probably functions indirectly by altering the affinity of the ribosome for aminoacyl-tRNA, thus increasing their reactivity as acceptors for peptidyl transferase. The chain is Elongation factor P from Chelativorans sp. (strain BNC1).